The primary structure comprises 316 residues: Pseudouridine-5'-phosphate glycosidase (316 aa).

The active-site Proton donor is glutamate 31. Lysine 92 and valine 112 together coordinate substrate. Mn(2+) is bound at residue aspartate 144. Substrate is bound at residue 146 to 148 (SAD). Residue lysine 165 is the Nucleophile of the active site.

The protein belongs to the pseudouridine-5'-phosphate glycosidase family. As to quaternary structure, homotrimer. The cofactor is Mn(2+).

The catalysed reaction is D-ribose 5-phosphate + uracil = psi-UMP + H2O. Functionally, catalyzes the reversible cleavage of pseudouridine 5'-phosphate (PsiMP) to ribose 5-phosphate and uracil. Functions biologically in the cleavage direction, as part of a pseudouridine degradation pathway. Part of an operon that could be involved in the biosynthesis of the blue pigment indigoidine, which is implicated in pathogenicity and protection from oxidative stress. This is Pseudouridine-5'-phosphate glycosidase from Dickeya dadantii (strain 3937) (Erwinia chrysanthemi (strain 3937)).